Here is a 921-residue protein sequence, read N- to C-terminus: Retinoblastoma-associated protein (921 aa).

Residues 1–36 (MPPKAPRRAAAAEPPPPPPPPPREDDPAQDSGPEEL) are disordered. Residue Pro2 is modified to N,N-dimethylproline; by NTM1. 2 positions are modified to phosphoserine: Ser31 and Ser243. 4 positions are modified to phosphothreonine: Thr246, Thr350, Thr364, and Thr367. The disordered stretch occupies residues 341 to 360 (PIDSFETERTPRKNNPDEEA). The span at 346-356 (ETERTPRKNNP) shows a compositional bias: basic and acidic residues. Residues 367 to 573 (TPVRTVMNTI…FDLIKQSKDG (207 aa)) are domain A. The segment at 367–764 (TPVRTVMNTI…QRLKTNILQY (398 aa)) is pocket; binds T and E1A. Ser561 carries the post-translational modification Phosphoserine; by CDK2. Residues 574–632 (EGPDNLEPACPLSLPLQGNHTAADMYLSPLRSPKKRTSTTRVNSAANTETQAASAFHTQ) form a spacer region. Ser601, Ser605, and Ser617 each carry phosphoserine. The domain B stretch occupies residues 633–764 (KPLKSTSLAL…QRLKTNILQY (132 aa)). Residues 756 to 921 (RLKTNILQYA…SKDVSNKEEK (166 aa)) form an interaction with LIMD1 region. The tract at residues 764 to 921 (YASTRPPTLS…SKDVSNKEEK (158 aa)) is domain; mediates interaction with E4F1. A phosphoserine mark is found at Ser773, Ser781, Ser788, and Ser800. An N6-methyllysine; by SMYD2 modification is found at Lys803. Ser804 is subject to Phosphoserine. Phosphothreonine occurs at positions 814, 816, 819, and 834. Ser848 carries the phosphoserine modification. At Lys853 the chain carries N6-methyllysine; by SMYD2. Residues 853–869 (KRSAEGGNPPKPLKKLR) carry the Bipartite nuclear localization signal motif. Residues Lys866 and Lys867 each carry the N6-acetyllysine; by PCAF modification. The segment at 872–921 (IEGADEADGSKHLPAESKFQQKLAEMTSTRTRMQKQRMNESKDVSNKEEK) is disordered. The segment covering 908 to 921 (RMNESKDVSNKEEK) has biased composition (basic and acidic residues).

The protein belongs to the retinoblastoma protein (RB) family. As to quaternary structure, the hypophosphorylated form interacts with and sequesters the E2F1 transcription factor, thereby inhibiting E2F1 transcription. Interacts with heterodimeric E2F/DP transcription factor complexes containing TFDP1 and either E2F1/E2F, E2F3, E2F4 or E2F5, or TFDP2 and E2F4. Interacts (when hyperphosphorylated and hypophosphorylated) with PKP3; the interaction inhibits RB1 interaction with and repression of the transcription factor E2F1, potentially via sequestering RB1 to the cytoplasm. The unphosphorylated form interacts with EID1, ARID3B, KDM5A, SUV39H1, MJD2A/JHDM3A and THOC1. Interacts with the N-terminal domain of TAF1. Interacts with SNW1, ATAD5, AATF, DNMT1, LIN9, LMNA, KMT5B, KMT5C, PELP1, UHRF2, TMPO-alpha and USP4. Interacts with GRIP1 and UBR4. Interacts with ARID4A and KDM5B. Interacts with E4F1 and LIMD1. Interacts with SMARCA4/BRG1 and HDAC1. Interacts with USP4. Interacts (when methylated at Lys-853) with L3MBTL1. Binds to CDK1 and CDK2. Interacts with CHEK2; phosphorylates RB1. Interacts with PRMT2. Interacts with CEBPA. P-TEFB complex interacts with RB1; promotes phosphorylation of RB1. Interacts with RBBP9; the interaction disrupts RB1 binding to E2F1. Interacts with KAT2B/PCAF and EP300/P300. Interacts with PAX5. Interacts (phosphorylated and unphosphorylated) with BLCAP. May interact with NDC80. (Microbial infection) Interacts with adenovirus E1a protein. In terms of assembly, (Microbial infection) Interacts with SV40 large T antigen. In terms of processing, phosphorylated. Phosphorylated by CDK6 and CDK4, and subsequently by CDK2 at Ser-561 in G1, thereby releasing E2F1 which is then able to activate cell growth. Dephosphorylated at the late M phase. Phosphorylation of threonine residues in domain C promotes interaction between the C-terminal domain C and the Pocket domain, and thereby inhibits interactions with heterodimeric E2F/DP transcription factor complexes. Dephosphorylated at Ser-788 by calcineruin upon calcium stimulation. CDK3/cyclin-C-mediated phosphorylation at Ser-800 and Ser-804 is required for G0-G1 transition. Phosphorylated by CDK1 and CDK2 upon TGFB1-mediated apoptosis. Monomethylation at Lys-803 by SMYD2 enhances phosphorylation at Ser-800 and Ser-804, and promotes cell cycle progression. Monomethylation at Lys-853 by SMYD2 promotes interaction with L3MBTL1. N-terminus is methylated by METTL11A/NTM1. Post-translationally, acetylated in the skin. Acetylation at Lys-866 and Lys-867 regulates subcellular localization during keratinocytes differentiation. As to expression, expressed in the cell nuclei of renal tubules, hepatocytes and skeletal muscles. Expressed in skin (at protein level).

It is found in the nucleus. The protein resides in the cytoplasm. In terms of biological role, tumor suppressor that is a key regulator of the G1/S transition of the cell cycle. The hypophosphorylated form binds transcription regulators of the E2F family, preventing transcription of E2F-responsive genes. Both physically blocks E2Fs transactivating domain and recruits chromatin-modifying enzymes that actively repress transcription. Cyclin and CDK-dependent phosphorylation of RB1 induces its dissociation from E2Fs, thereby activating transcription of E2F responsive genes and triggering entry into S phase. RB1 also promotes the G0-G1 transition upon phosphorylation and activation by CDK3/cyclin-C. Directly involved in heterochromatin formation by maintaining overall chromatin structure and, in particular, that of constitutive heterochromatin by stabilizing histone methylation. Recruits and targets histone methyltransferases SUV39H1, KMT5B and KMT5C, leading to epigenetic transcriptional repression. Controls histone H4 'Lys-20' trimethylation. Inhibits the intrinsic kinase activity of TAF1. Mediates transcriptional repression by SMARCA4/BRG1 by recruiting a histone deacetylase (HDAC) complex to the c-FOS promoter. In resting neurons, transcription of the c-FOS promoter is inhibited by BRG1-dependent recruitment of a phospho-RB1-HDAC1 repressor complex. Upon calcium influx, RB1 is dephosphorylated by calcineurin, which leads to release of the repressor complex. The polypeptide is Retinoblastoma-associated protein (Rb1) (Mus musculus (Mouse)).